A 67-amino-acid polypeptide reads, in one-letter code: Guanine nucleotide-binding protein G(I)/G(S)/G(O) subunit gamma-13 (67 aa).

Cysteine 64 carries the cysteine methyl ester modification. A lipid anchor (S-farnesyl cysteine) is attached at cysteine 64. Positions 65-67 (TIL) are cleaved as a propeptide — removed in mature form.

It belongs to the G protein gamma family. In terms of assembly, g proteins are composed of 3 units, alpha, beta and gamma.

It localises to the cell membrane. Guanine nucleotide-binding proteins (G proteins) are involved as a modulator or transducer in various transmembrane signaling systems. The beta and gamma chains are required for the GTPase activity, for replacement of GDP by GTP, and for G protein-effector interaction. The protein is Guanine nucleotide-binding protein G(I)/G(S)/G(O) subunit gamma-13 (GNG13) of Homo sapiens (Human).